The following is a 346-amino-acid chain: MQSITITPDLSSNFKDFVTIDAHTEGEPLRVIISGYPEIKGSTILEKRQYVQQNLDTYRKLLMHEPRGHADMYGALITEAVTEEADFGVLFLHNEGYSSMCGHGILALVKVMCQTDSIDLGLEPRTIKIDSPAGLITAKAYRDSQGKIQASFKNVDSWADALNCSVNVEGFGEVNYDIGFGGAYYAYVDADEHGISCGQDNVAQLIDVGRRIKHAVMASHTLVHPLEEDLSFLYGTIFTSKKVTNPEAHSRHVCIFADGEVDRSPTGTGVSARVALLYAKGEVALNTPIMIESIVDGRMIVSASAESEFHGKQGVIPEVSGRSFITGKHQFFIDPDDVFQNGFMLR.

C101 acts as the Proton acceptor in catalysis. Residues 102 to 103 (GH), D262, and 267 to 268 (GT) contribute to the substrate site.

This sequence belongs to the proline racemase family.

It catalyses the reaction trans-3-hydroxy-L-proline = 1-pyrroline-2-carboxylate + H2O. Its function is as follows. In vitro, catalyzes the dehydration of trans-3-hydroxy-L-proline (t3LHyp) to Delta(1)-pyrroline-2-carboxylate (Pyr2C), albeit with very low efficiency. The physiological substrate may be different. Displays neither trans-4-hydroxy-L-proline (t4LHyp) epimerase nor proline racemase activity. The sequence is that of Protein Spea_1705 from Shewanella pealeana (strain ATCC 700345 / ANG-SQ1).